The following is a 388-amino-acid chain: L-lactate dehydrogenase (388 aa).

In terms of domain architecture, FMN hydroxy acid dehydrogenase spans M1–R380. A substrate-binding site is contributed by Y24. FMN contacts are provided by S106 and Q127. Y129 contributes to the substrate binding site. T155 contributes to the FMN binding site. R164 provides a ligand contact to substrate. K251 provides a ligand contact to FMN. The active-site Proton acceptor is the H275. Residue R278 participates in substrate binding. D306 to R330 lines the FMN pocket.

This sequence belongs to the FMN-dependent alpha-hydroxy acid dehydrogenase family. FMN serves as cofactor.

It localises to the cell inner membrane. The enzyme catalyses (S)-lactate + A = pyruvate + AH2. Catalyzes the conversion of L-lactate to pyruvate. Is coupled to the respiratory chain. This Xanthomonas euvesicatoria pv. vesicatoria (strain 85-10) (Xanthomonas campestris pv. vesicatoria) protein is L-lactate dehydrogenase.